We begin with the raw amino-acid sequence, 792 residues long: uncharacterized protein (792 aa).

361–362 (WD) provides a ligand contact to substrate. Glu-488 (proton donor) is an active-site residue. Substrate is bound at residue 590-591 (KQ). A disordered region spans residues 753–792 (DSPSTIAVRDRKPLLPPPSQPPGREPVSRRHKSLIISAAR). Positions 766 to 776 (LLPPPSQPPGR) are enriched in pro residues.

Belongs to the glycosyl hydrolase 65 family.

This is an uncharacterized protein from Mycobacterium leprae (strain TN).